Reading from the N-terminus, the 284-residue chain is Pantothenate synthetase (284 aa).

30-37 (MGNLHDGH) provides a ligand contact to ATP. His37 serves as the catalytic Proton donor. Gln61 is a (R)-pantoate binding site. Gln61 is a beta-alanine binding site. Residue 149-152 (GEKD) coordinates ATP. Residue Gln155 participates in (R)-pantoate binding. Residues Val178 and 186 to 189 (LSSR) each bind ATP.

It belongs to the pantothenate synthetase family. As to quaternary structure, homodimer.

It localises to the cytoplasm. The enzyme catalyses (R)-pantoate + beta-alanine + ATP = (R)-pantothenate + AMP + diphosphate + H(+). Its pathway is cofactor biosynthesis; (R)-pantothenate biosynthesis; (R)-pantothenate from (R)-pantoate and beta-alanine: step 1/1. Its function is as follows. Catalyzes the condensation of pantoate with beta-alanine in an ATP-dependent reaction via a pantoyl-adenylate intermediate. The sequence is that of Pantothenate synthetase from Enterobacter sp. (strain 638).